The chain runs to 264 residues: Glutamate racemase (264 aa).

Substrate contacts are provided by residues Asp-10–Ser-11 and Tyr-42–Gly-43. The active-site Proton donor/acceptor is Cys-73. Asn-74 to Thr-75 contributes to the substrate binding site. The active-site Proton donor/acceptor is Cys-181. Thr-182–His-183 contributes to the substrate binding site.

This sequence belongs to the aspartate/glutamate racemases family.

The catalysed reaction is L-glutamate = D-glutamate. Its pathway is cell wall biogenesis; peptidoglycan biosynthesis. In terms of biological role, provides the (R)-glutamate required for cell wall biosynthesis. In Thermoanaerobacter sp. (strain X514), this protein is Glutamate racemase.